Here is a 450-residue protein sequence, read N- to C-terminus: Phosphoglucosamine mutase (450 aa).

Residue Ser-101 is the Phosphoserine intermediate of the active site. Residues Ser-101, Asp-241, Asp-243, and Asp-245 each contribute to the Mg(2+) site. Ser-101 bears the Phosphoserine mark.

The protein belongs to the phosphohexose mutase family. Mg(2+) is required as a cofactor. Post-translationally, activated by phosphorylation.

The enzyme catalyses alpha-D-glucosamine 1-phosphate = D-glucosamine 6-phosphate. Functionally, catalyzes the conversion of glucosamine-6-phosphate to glucosamine-1-phosphate. The chain is Phosphoglucosamine mutase from Listeria monocytogenes serotype 4b (strain F2365).